The chain runs to 368 residues: tRNA/tmRNA (uracil-C(5))-methyltransferase (368 aa).

Positions 186, 214, 219, 235, and 295 each coordinate S-adenosyl-L-methionine. The active-site Nucleophile is C320. E354 functions as the Proton acceptor in the catalytic mechanism.

Belongs to the class I-like SAM-binding methyltransferase superfamily. RNA M5U methyltransferase family. TrmA subfamily.

The catalysed reaction is uridine(54) in tRNA + S-adenosyl-L-methionine = 5-methyluridine(54) in tRNA + S-adenosyl-L-homocysteine + H(+). It carries out the reaction uridine(341) in tmRNA + S-adenosyl-L-methionine = 5-methyluridine(341) in tmRNA + S-adenosyl-L-homocysteine + H(+). Dual-specificity methyltransferase that catalyzes the formation of 5-methyluridine at position 54 (m5U54) in all tRNAs, and that of position 341 (m5U341) in tmRNA (transfer-mRNA). The chain is tRNA/tmRNA (uracil-C(5))-methyltransferase from Aromatoleum aromaticum (strain DSM 19018 / LMG 30748 / EbN1) (Azoarcus sp. (strain EbN1)).